A 529-amino-acid polypeptide reads, in one-letter code: PTS system alpha-glucoside-specific EIICB component (529 aa).

The region spanning 1-416 is the PTS EIIC type-1 domain; it reads MMKKVQRFGG…MDLKTPGRED (416 aa). 12 helical membrane passes run 8–28, 59–79, 91–111, 130–150, 170–190, 198–218, 222–242, 272–292, 304–324, 328–348, 352–372, and 380–400; these read FGGA…VVGL, GWTV…ISLA, FALY…FYGI, VPTL…VVYL, VFVY…TVLI, ISAL…IYTF, ILIP…GPAA, GGFA…ALAM, VAAL…TEPL, FLFI…TMAA, AFGV…LNWI, and GTVI…FVVF. One can recognise a PTS EIIB type-1 domain in the interval 450 to 529; sequence AQKGAIILEA…ERIEEMMKKG (80 aa). Cys472 functions as the Phosphocysteine intermediate; for EIIB activity in the catalytic mechanism.

It localises to the cell membrane. Its function is as follows. The phosphoenolpyruvate-dependent sugar phosphotransferase system (sugar PTS), a major carbohydrate active -transport system, catalyzes the phosphorylation of incoming sugar substrates concomitantly with their translocation across the cell membrane. This system is probably involved in transport of the alpha-glucosides trehalulose, turanose, maltulose and palatinose. In Leptotrichia buccalis (strain ATCC 14201 / DSM 1135 / JCM 12969 / NCTC 10249 / C-1013-b), this protein is PTS system alpha-glucoside-specific EIICB component.